The sequence spans 775 residues: MMVQRLGLISPPASQVSTACNQISPSLQRAMNAANLNIPPSDTRSLISRESLASTTLSLTESQSASSMKQEWSQGYRALPSLSNHGSQNGLDLGDLLSLPPGTSMSSNSVSNSLPSYLFGTESSHSPYPSPRHSSTRSHSARSKKRALSLSPLSDGIGIDFNTIIRTSPTSLVAYINGSRASPANLSPQPEVYGHFLGVRGSCIPQPRPVPGSQKGVLVAPGGLALPAYGEDGALEHERMQQLEHGGLQPGLVNHMVVQHGLPGPDSQSAGLFKTERLEEFPGSTVDLPPAPPLPPLPPPPGPPPPYHAHAHLHHPELGPHAQQLALPQATLDDDGEMDGIGGKHCCRWIDCSALYDQQEELVRHIEKVHIDQRKGEDFTCFWAGCPRRYKPFNARYKLLIHMRVHSGEKPNKCTFEGCEKAFSRLENLKIHLRSHTGEKPYLCQHPGCQKAFSNSSDRAKHQRTHLDTKPYACQIPGCTKRYTDPSSLRKHVKAHSSKEQQARKKLRSSTELHPDLLTDCLTVQSLQPATSPRDAAAEGTVGRSPGPGPDLYSAPIFSSNYSSRSGTAAGAVPPPHPVSHPSPGHNVQGSPHNPSSQLPPLTAVDAGAERFAPSAPSPHHISPRRVPAPSSILQRTQPPYTQQPSGSHLKSYQPETNSSFQPNGIHVHGFYGQLQKFCPPHYPDSQRIVPPVSSCSVVPSFEDCLVPTSMGQASFDVFHRAFSTHSGITVYDLPSSSSSLFGESLRSGAEDATFLQISTVDRCPSQLSSVYTEG.

Disordered stretches follow at residues 121-147 (TESSHSPYPSPRHSSTRSHSARSKKRA) and 282-314 (PGSTVDLPPAPPLPPLPPPPGPPPPYHAHAHLH). Low complexity predominate over residues 123 to 133 (SSHSPYPSPRH). The span at 134 to 147 (SSTRSHSARSKKRA) shows a compositional bias: basic residues. Residues 289 to 307 (PPAPPLPPLPPPPGPPPPY) are compositionally biased toward pro residues. The C2H2-type 1 zinc finger occupies 345–370 (HCCRWIDCSALYDQQEELVRHIEKVH). A C2H2-type 2; atypical zinc finger spans residues 379 to 406 (FTCFWAGCPRRYKPFNARYKLLIHMRVH). 3 consecutive C2H2-type zinc fingers follow at residues 412–436 (NKCTFEGCEKAFSRLENLKIHLRSH), 442–466 (YLCQHPGCQKAFSNSSDRAKHQRTH), and 472–496 (YACQIPGCTKRYTDPSSLRKHVKAH). 2 disordered regions span residues 485 to 512 (DPSSLRKHVKAHSSKEQQARKKLRSSTE) and 529 to 665 (PATS…QPNG). Residues 491 to 507 (KHVKAHSSKEQQARKKL) carry the Bipartite nuclear localization signal motif. A compositionally biased stretch (basic and acidic residues) spans 497-512 (SSKEQQARKKLRSSTE). Composition is skewed to polar residues over residues 557 to 567 (IFSSNYSSRSG), 588 to 600 (VQGSPHNPSSQLP), and 632 to 663 (SILQRTQPPYTQQPSGSHLKSYQPETNSSFQP).

Belongs to the GLI C2H2-type zinc-finger protein family. As to expression, in the adult, expressed at high levels in the kidney and at lower levels in the brain, skeletal muscle, pancreas, liver, lung, thymus and ovary.

Its subcellular location is the nucleus. Functionally, acts both as a repressor and an activator of transcription. Binds to the consensus sequence 5'-GACCACCCAC-3'. The polypeptide is Zinc finger protein GLIS3 (GLIS3) (Homo sapiens (Human)).